Here is a 594-residue protein sequence, read N- to C-terminus: Putative phospholipase B-like 2 (594 aa).

The signal sequence occupies residues 1–46; sequence MAAPVDGSSGGWAARALRRALALTSLTTLALLASLTGLLLSGPAGA. 2 N-linked (GlcNAc...) asparagine glycosylation sites follow: N93 and N115. A disulfide bond links C147 and C157. 2 N-linked (GlcNAc...) asparagine glycosylation sites follow: N236 and N441. A disulfide bridge links C497 with C500. An N-linked (GlcNAc...) asparagine glycan is attached at N520.

It belongs to the phospholipase B-like family. As to quaternary structure, interacts with IGF2R. The p76 protein is synthesized as a 76 kDa precursor which is then processed into a N-terminal 28 kDa form and a C-terminal 40 kDa form. The C-terminal peptide is further processed into a 15 kDa form. In terms of processing, glycosylated; contains mannose 6-phosphate sugars. In terms of tissue distribution, present at highest levels in spleen, lung and brain (at protein level).

The protein localises to the lysosome lumen. Functionally, putative phospholipase. In Mus musculus (Mouse), this protein is Putative phospholipase B-like 2 (Plbd2).